The sequence spans 291 residues: Oxidative stress-responsive serine-rich protein 1 (291 aa).

Residues 44 to 139 (RTTVDDTKPK…STGENSTSLD (96 aa)) form a disordered region. Over residues 65-83 (STRKSSRGAVRIQRRRRSK) the composition is skewed to basic residues. Composition is skewed to polar residues over residues 95 to 113 (CSTTASPSSSQLKQRSQTE) and 127 to 139 (KEFSTGENSTSLD). The residue at position 143 (T143) is a Phosphothreonine.

In terms of tissue distribution, ubiquitous with high level in testis, placenta and cardiac myocytes. Expressed in testis, unpreganant uterus and cardiac myocytes.

In Rattus norvegicus (Rat), this protein is Oxidative stress-responsive serine-rich protein 1 (Oser1).